We begin with the raw amino-acid sequence, 205 residues long: Small ribosomal subunit protein uS4 (205 aa).

A disordered region spans residues 19 to 45 (IWGRPKSPVNRREYGPGQHGQRRKGKL). The 64-residue stretch at 94–157 (SRLDAVVYRA…KQLVIVLEAV (64 aa)) folds into the S4 RNA-binding domain.

Belongs to the universal ribosomal protein uS4 family. In terms of assembly, part of the 30S ribosomal subunit. Contacts protein S5. The interaction surface between S4 and S5 is involved in control of translational fidelity.

Functionally, one of the primary rRNA binding proteins, it binds directly to 16S rRNA where it nucleates assembly of the body of the 30S subunit. In terms of biological role, with S5 and S12 plays an important role in translational accuracy. This chain is Small ribosomal subunit protein uS4, found in Brucella anthropi (strain ATCC 49188 / DSM 6882 / CCUG 24695 / JCM 21032 / LMG 3331 / NBRC 15819 / NCTC 12168 / Alc 37) (Ochrobactrum anthropi).